The following is a 150-amino-acid chain: Ribonuclease H (150 aa).

Residues 2-143 form the RNase H type-1 domain; that stretch reads PAPILDIFVD…ADELANRAIE (142 aa). The Mg(2+) site is built by Asp11, Glu49, Asp71, and Asp135.

The protein belongs to the RNase H family. In terms of assembly, monomer. Requires Mg(2+) as cofactor.

Its subcellular location is the cytoplasm. It carries out the reaction Endonucleolytic cleavage to 5'-phosphomonoester.. Endonuclease that specifically degrades the RNA of RNA-DNA hybrids. The protein is Ribonuclease H of Dichelobacter nodosus (strain VCS1703A).